The chain runs to 398 residues: 1-deoxy-D-xylulose 5-phosphate reductoisomerase (398 aa).

The NADPH site is built by threonine 10, glycine 11, serine 12, isoleucine 13, glycine 36, arginine 37, asparagine 38, and asparagine 124. Position 125 (lysine 125) interacts with 1-deoxy-D-xylulose 5-phosphate. Position 126 (glutamate 126) interacts with NADPH. Position 150 (aspartate 150) interacts with Mn(2+). 4 residues coordinate 1-deoxy-D-xylulose 5-phosphate: serine 151, glutamate 152, serine 186, and histidine 209. Glutamate 152 provides a ligand contact to Mn(2+). Glycine 215 lines the NADPH pocket. 1-deoxy-D-xylulose 5-phosphate contacts are provided by serine 222, asparagine 227, lysine 228, and glutamate 231. Glutamate 231 contributes to the Mn(2+) binding site.

It belongs to the DXR family. As to quaternary structure, homodimer. Requires Mg(2+) as cofactor. The cofactor is Mn(2+).

The enzyme catalyses 2-C-methyl-D-erythritol 4-phosphate + NADP(+) = 1-deoxy-D-xylulose 5-phosphate + NADPH + H(+). Its pathway is isoprenoid biosynthesis; isopentenyl diphosphate biosynthesis via DXP pathway; isopentenyl diphosphate from 1-deoxy-D-xylulose 5-phosphate: step 1/6. In terms of biological role, catalyzes the NADPH-dependent rearrangement and reduction of 1-deoxy-D-xylulose-5-phosphate (DXP) to 2-C-methyl-D-erythritol 4-phosphate (MEP). The sequence is that of 1-deoxy-D-xylulose 5-phosphate reductoisomerase from Yersinia pseudotuberculosis serotype O:1b (strain IP 31758).